Consider the following 576-residue polypeptide: MAGUK p55 subfamily member 7 (576 aa).

L27 domains are found at residues 10 to 64 and 65 to 122; these read CDMG…EKQN and PLPI…YDPV. A PDZ domain is found at 139-220; it reads IIRLVKNSEP…AITFKIIPST (82 aa). Residues 228–298 form the SH3 domain; it reads EGKIFIKALF…PSKHFQERRL (71 aa). The tract at residues 289 to 383 is phospho-regulated basic and hydrophobic (PRBH) motif; it reads PSKHFQERRL…VGPVGVGLNE (95 aa). One can recognise a Guanylate kinase-like domain in the interval 368 to 560; sequence YRLIVLVGPV…AFNELKTTFD (193 aa). The residue at position 409 (serine 409) is a Phosphoserine.

It belongs to the MAGUK family. As to quaternary structure, heterodimer; able to heterodimerize via its C-terminal L27 domain with LIN7A, LIN7B and LIN7C. Forms a tripartite complex composed of DLG1, MPP7 and LIN7 (LIN7A or LIN7C). Interacts with DLG1 via its N-terminal L27 domain. Interacts with PALS1 and PATJ. Post-translationally, phosphorylated by aPKC which promotes dissociation from the cell cortex.

The protein resides in the membrane. It localises to the lateral cell membrane. The protein localises to the cell junction. Its subcellular location is the tight junction. It is found in the adherens junction. The protein resides in the cytoplasm. It localises to the cell cortex. Its function is as follows. Acts as an important adapter that promotes epithelial cell polarity and tight junction formation via its interaction with DLG1. Involved in the assembly of protein complexes at sites of cell-cell contact. In Mus musculus (Mouse), this protein is MAGUK p55 subfamily member 7 (Mpp7).